Here is a 249-residue protein sequence, read N- to C-terminus: Triosephosphate isomerase (249 aa).

9-11 (NWK) lines the substrate pocket. The active-site Electrophile is H95. The active-site Proton acceptor is the E166. Substrate is bound by residues G172, S211, and 232–233 (GG).

The protein belongs to the triosephosphate isomerase family. In terms of assembly, homodimer.

It localises to the cytoplasm. The catalysed reaction is D-glyceraldehyde 3-phosphate = dihydroxyacetone phosphate. Its pathway is carbohydrate biosynthesis; gluconeogenesis. It functions in the pathway carbohydrate degradation; glycolysis; D-glyceraldehyde 3-phosphate from glycerone phosphate: step 1/1. In terms of biological role, involved in the gluconeogenesis. Catalyzes stereospecifically the conversion of dihydroxyacetone phosphate (DHAP) to D-glyceraldehyde-3-phosphate (G3P). The protein is Triosephosphate isomerase of Legionella pneumophila (strain Lens).